We begin with the raw amino-acid sequence, 443 residues long: tRNA (guanine-N(7)-)-methyltransferase non-catalytic subunit TRM82 (443 aa).

The disordered stretch occupies residues A67 to P93. WD repeat units follow at residues P97–I137, G193–K235, and G239–K279.

The protein belongs to the WD repeat TRM82 family. Forms a heterodimer with the catalytic subunit TRM8.

It localises to the nucleus. The protein operates within tRNA modification; N(7)-methylguanine-tRNA biosynthesis. Required for the formation of N(7)-methylguanine at position 46 (m7G46) in tRNA. In the complex, it is required to stabilize and induce conformational changes of the catalytic subunit. The chain is tRNA (guanine-N(7)-)-methyltransferase non-catalytic subunit TRM82 from Kluyveromyces lactis (strain ATCC 8585 / CBS 2359 / DSM 70799 / NBRC 1267 / NRRL Y-1140 / WM37) (Yeast).